Consider the following 314-residue polypeptide: Mitochondrial 2-oxoglutarate/malate carrier protein (314 aa).

Position 2 is an N-acetylalanine (A2). Residue S6 is modified to Phosphoserine. 3 Solcar repeats span residues 23-108, 117-208, and 217-306; these read VKFL…LFER, PGFL…SKQF, and DNIL…MNKA. The chain crosses the membrane as a helical span at residues 24-42; it reads KFLFGGLAGMGATVFVQPL. The residue at position 57 (K57) is an N6-succinyllysine. A helical membrane pass occupies residues 83-101; sequence GLSAGLLRQATYTTTRLGI. Y102 is modified (phosphotyrosine). 3 helical membrane passes run 119 to 140, 183 to 202, and 222 to 240; these read FLLK…GTPA, GCIP…LASY, and HFCA…SMPV. K256 is subject to N6-acetyllysine. Residues 281–300 form a helical membrane-spanning segment; it reads GFTPYYARLGPHTVLTFIFL.

This sequence belongs to the mitochondrial carrier (TC 2.A.29) family. In terms of assembly, interacts with SMIM26. In terms of processing, the N-terminus is blocked. As to expression, heart, liver and brain.

The protein resides in the mitochondrion inner membrane. It carries out the reaction (S)-malate(in) + 2-oxoglutarate(out) = (S)-malate(out) + 2-oxoglutarate(in). The catalysed reaction is malonate(in) + 2-oxoglutarate(out) = malonate(out) + 2-oxoglutarate(in). The enzyme catalyses succinate(in) + 2-oxoglutarate(out) = succinate(out) + 2-oxoglutarate(in). It catalyses the reaction maleate(in) + 2-oxoglutarate(out) = maleate(out) + 2-oxoglutarate(in). It carries out the reaction oxaloacetate(in) + 2-oxoglutarate(out) = oxaloacetate(out) + 2-oxoglutarate(in). Catalyzes the transport of 2-oxoglutarate (alpha-oxoglutarate) across the inner mitochondrial membrane in an electroneutral exchange for malate. Can also exchange 2-oxoglutarate for other dicarboxylic acids such as malonate, succinate, maleate and oxaloacetate, although with lower affinity. Contributes to several metabolic processes, including the malate-aspartate shuttle, the oxoglutarate/isocitrate shuttle, in gluconeogenesis from lactate, and in nitrogen metabolism. Maintains mitochondrial fusion and fission events, and the organization and morphology of cristae. Involved in the regulation of apoptosis. Helps protect from cytotoxic-induced apoptosis by modulating glutathione levels in mitochondria. The polypeptide is Mitochondrial 2-oxoglutarate/malate carrier protein (SLC25A11) (Bos taurus (Bovine)).